Reading from the N-terminus, the 489-residue chain is MTFRNCVAVDLGASSGRVMLARYERECRSLTLREIHRFKNGLHSQNGYVTWNVDSLESAIRLGLNKVCEEGIRIDSIGIDTWGVDFVLLDQQGQRVGLPVAYRDSRSNGLMAQAQQQLGKRDIYQRSGIQFLPFNTLYQLRALTEQQPELIPHIAHALLMPDYFSYRLTGKMNWEYTNATTTQLVNINSDDWDESLLAWSGANKAWFGRPTHPGNVIGHWICPQGNEIPVVAVASHDTASAVIASPLNGSRAAYLSSGTWSLMGFESQTPFTNDTALAANITNEGGAEGRYRVLKNIMGLWLLQRVLQERQINDLPALIAATQALPACRFIINPNDDRFINPEAMCSEIQAACRETAQPIPESDAELARCIFDSLALLYADVLHELAQLRGEDFSQLHIVGGGCQNTLLNQLCADACGIRVIAGPVEASTLGNIGIQLMTLDELNNVDDFRQVVSTTANLTTFTPNPDSEIAHYVAQIHSTRQTKELCA.

13 to 17 (ASSGR) contributes to the ATP binding site. Cysteines 68 and 222 form a disulfide. Substrate contacts are provided by residues Gly83 and 236–238 (HDT). Asp237 functions as the Proton acceptor in the catalytic mechanism. Thr259 is an ATP binding site. Asn296 provides a ligand contact to substrate. Gln304 is a binding site for ATP. A disulfide bridge links Cys353 with Cys370. Gly402 serves as a coordination point for ATP. An intrachain disulfide couples Cys413 to Cys417.

This sequence belongs to the rhamnulokinase family. In terms of assembly, monomer. Mg(2+) is required as a cofactor.

It catalyses the reaction L-rhamnulose + ATP = L-rhamnulose 1-phosphate + ADP + H(+). It functions in the pathway carbohydrate degradation; L-rhamnose degradation; glycerone phosphate from L-rhamnose: step 2/3. Its function is as follows. Involved in the catabolism of L-rhamnose (6-deoxy-L-mannose). Catalyzes the transfer of the gamma-phosphate group from ATP to the 1-hydroxyl group of L-rhamnulose to yield L-rhamnulose 1-phosphate. The protein is Rhamnulokinase of Escherichia coli O139:H28 (strain E24377A / ETEC).